The primary structure comprises 335 residues: 2-acylglycerol O-acyltransferase 2-A (335 aa).

Transmembrane regions (helical) follow at residues 24–44 (WVFSFLALAQTCILLFFVLLF) and 47–67 (FWIISVVYGVWWFLDWDTPSK).

The protein belongs to the diacylglycerol acyltransferase family.

The protein localises to the endoplasmic reticulum membrane. The protein resides in the cytoplasm. Its subcellular location is the perinuclear region. It carries out the reaction a 2-acylglycerol + an acyl-CoA = a 1,2-diacylglycerol + CoA. It catalyses the reaction a 2-acylglycerol + an acyl-CoA = a 1,2-diacyl-sn-glycerol + CoA. The catalysed reaction is a 2-acylglycerol + an acyl-CoA = a 2,3-diacyl-sn-glycerol + CoA. The enzyme catalyses a 1-acylglycerol + an acyl-CoA = a 1,2-diacylglycerol + CoA. It carries out the reaction a 1-acylglycerol + an acyl-CoA = a 1,3-diacylglycerol + CoA. It catalyses the reaction 1-O-alkylglycerol + an acyl-CoA = 1-O-alkyl-3-acylglycerol + CoA. The catalysed reaction is an acyl-CoA + a 1,2-diacyl-sn-glycerol = a triacyl-sn-glycerol + CoA. Its pathway is glycerolipid metabolism; triacylglycerol biosynthesis. Its function is as follows. Catalyzes the formation of diacylglycerol from 2-monoacylglycerol and fatty acyl-CoA. Involved in glycerolipid synthesis and lipid metabolism. Catalyzes the formation of diacylglycerol, the precursor of triacylglycerol, by transferring the acyl chain of a fatty acyl-CoA to a monoacylglycerol. Plays a central role in absorption of dietary fat in the small intestine by catalyzing the resynthesis of triacylglycerol in enterocytes. Has a preference toward monoacylglycerols containing unsaturated fatty acids in an order of C18:3 &gt; C18:2 &gt; C18:1 &gt; C18:0 at sn-2. Able to use 1-monoalkylglycerol (1-MAkG, 1-O-alkylglycerol) as an acyl acceptor for the synthesis of monoalkyl-monoacylglycerol (MAMAG, 1-O-alkyl-3-acylglycerol or 1-O-alkyl-2-acylglycerol) and subsequently, with lower efficiency, may add another acyl chain producing monoalkyl-diacylglycerol (MADAG, 1-O-alkyl-2,3-diacylglycerol). Possesses weak but significant activity with diacylglycerol as substrate, producing triacylglycerol (triacyl-sn-glycerol). The sequence is that of 2-acylglycerol O-acyltransferase 2-A (mogat2-a) from Xenopus laevis (African clawed frog).